Here is a 467-residue protein sequence, read N- to C-terminus: uncharacterized protein (467 aa).

Residue Lys-290 is modified to N6-(pyridoxal phosphate)lysine.

Belongs to the class-III pyridoxal-phosphate-dependent aminotransferase family. The cofactor is pyridoxal 5'-phosphate.

This is an uncharacterized protein from Sinorhizobium fredii (strain NBRC 101917 / NGR234).